The sequence spans 181 residues: NADH-quinone oxidoreductase subunit I (181 aa).

2 4Fe-4S ferredoxin-type domains span residues 44 to 74 (LNRY…VEGA) and 90 to 119 (RVYQ…MTND). [4Fe-4S] cluster contacts are provided by Cys54, Cys57, Cys60, Cys64, Cys99, Cys102, Cys105, and Cys109.

Belongs to the complex I 23 kDa subunit family. As to quaternary structure, NDH-1 is composed of 14 different subunits. Subunits NuoA, H, J, K, L, M, N constitute the membrane sector of the complex. [4Fe-4S] cluster is required as a cofactor.

It is found in the cell membrane. The catalysed reaction is a quinone + NADH + 5 H(+)(in) = a quinol + NAD(+) + 4 H(+)(out). In terms of biological role, NDH-1 shuttles electrons from NADH, via FMN and iron-sulfur (Fe-S) centers, to quinones in the respiratory chain. The immediate electron acceptor for the enzyme in this species is believed to be menaquinone. Couples the redox reaction to proton translocation (for every two electrons transferred, four hydrogen ions are translocated across the cytoplasmic membrane), and thus conserves the redox energy in a proton gradient. The sequence is that of NADH-quinone oxidoreductase subunit I from Mycobacterium marinum (strain ATCC BAA-535 / M).